Reading from the N-terminus, the 447-residue chain is Methyl-coenzyme M reductase I subunit beta (447 aa).

Position 371 (Y371) interacts with coenzyme M. Residue G373 coordinates coenzyme B.

Belongs to the methyl-coenzyme M reductase beta subunit family. As to quaternary structure, MCR is a hexamer of two alpha, two beta, and two gamma chains, forming a dimer of heterotrimers. Requires coenzyme F430 as cofactor.

The protein localises to the cytoplasm. It catalyses the reaction coenzyme B + methyl-coenzyme M = methane + coenzyme M-coenzyme B heterodisulfide. It functions in the pathway one-carbon metabolism; methyl-coenzyme M reduction; methane from methyl-coenzyme M: step 1/1. In terms of biological role, component of the methyl-coenzyme M reductase (MCR) I that catalyzes the reductive cleavage of methyl-coenzyme M (CoM-S-CH3 or 2-(methylthio)ethanesulfonate) using coenzyme B (CoB or 7-mercaptoheptanoylthreonine phosphate) as reductant which results in the production of methane and the mixed heterodisulfide of CoB and CoM (CoM-S-S-CoB). This is the final step in methanogenesis. The chain is Methyl-coenzyme M reductase I subunit beta (mcrB) from Methanocaldococcus jannaschii (strain ATCC 43067 / DSM 2661 / JAL-1 / JCM 10045 / NBRC 100440) (Methanococcus jannaschii).